Here is a 111-residue protein sequence, read N- to C-terminus: Cell cycle protein GpsB (111 aa).

Residues Ile-38–Val-72 adopt a coiled-coil conformation.

This sequence belongs to the GpsB family. As to quaternary structure, forms polymers through the coiled coil domains. Interacts with PBP1, MreC and EzrA.

The protein localises to the cytoplasm. Its function is as follows. Divisome component that associates with the complex late in its assembly, after the Z-ring is formed, and is dependent on DivIC and PBP2B for its recruitment to the divisome. Together with EzrA, is a key component of the system that regulates PBP1 localization during cell cycle progression. Its main role could be the removal of PBP1 from the cell pole after pole maturation is completed. Also contributes to the recruitment of PBP1 to the division complex. Not essential for septum formation. The polypeptide is Cell cycle protein GpsB (Bacillus cereus (strain G9842)).